Consider the following 131-residue polypeptide: uncharacterized protein (131 aa).

This is an uncharacterized protein from Caenorhabditis elegans.